The primary structure comprises 196 residues: Probable malonic semialdehyde reductase RutE (196 aa).

The protein belongs to the nitroreductase family. HadB/RutE subfamily. It depends on FMN as a cofactor.

The catalysed reaction is 3-hydroxypropanoate + NADP(+) = 3-oxopropanoate + NADPH + H(+). May reduce toxic product malonic semialdehyde to 3-hydroxypropionic acid, which is excreted. This chain is Probable malonic semialdehyde reductase RutE, found in Shigella sonnei (strain Ss046).